The primary structure comprises 256 residues: Acetyl-coenzyme A carboxylase carboxyl transferase subunit alpha (256 aa).

The region spanning 1–236 is the CoA carboxyltransferase C-terminal domain; the sequence is MTKITRIVRE…KQELLVELEQ (236 aa).

It belongs to the AccA family. In terms of assembly, acetyl-CoA carboxylase is a heterohexamer composed of biotin carboxyl carrier protein (AccB), biotin carboxylase (AccC) and two subunits each of ACCase subunit alpha (AccA) and ACCase subunit beta (AccD).

It localises to the cytoplasm. The catalysed reaction is N(6)-carboxybiotinyl-L-lysyl-[protein] + acetyl-CoA = N(6)-biotinyl-L-lysyl-[protein] + malonyl-CoA. The protein operates within lipid metabolism; malonyl-CoA biosynthesis; malonyl-CoA from acetyl-CoA: step 1/1. Functionally, component of the acetyl coenzyme A carboxylase (ACC) complex. First, biotin carboxylase catalyzes the carboxylation of biotin on its carrier protein (BCCP) and then the CO(2) group is transferred by the carboxyltransferase to acetyl-CoA to form malonyl-CoA. This Streptococcus gordonii (strain Challis / ATCC 35105 / BCRC 15272 / CH1 / DL1 / V288) protein is Acetyl-coenzyme A carboxylase carboxyl transferase subunit alpha.